A 161-amino-acid polypeptide reads, in one-letter code: Nucleotide-binding protein Dtpsy_2240 (161 aa).

The protein belongs to the YajQ family.

Nucleotide-binding protein. The sequence is that of Nucleotide-binding protein Dtpsy_2240 from Acidovorax ebreus (strain TPSY) (Diaphorobacter sp. (strain TPSY)).